A 466-amino-acid polypeptide reads, in one-letter code: Soluble pyridine nucleotide transhydrogenase (466 aa).

Position 36-45 (36-45) interacts with FAD; sequence ERYQNVGGGC.

It belongs to the class-I pyridine nucleotide-disulfide oxidoreductase family. In terms of assembly, homooligomer; probable homooctamer. Requires FAD as cofactor.

It localises to the cytoplasm. It catalyses the reaction NAD(+) + NADPH = NADH + NADP(+). Conversion of NADPH, generated by peripheral catabolic pathways, to NADH, which can enter the respiratory chain for energy generation. The chain is Soluble pyridine nucleotide transhydrogenase from Shigella flexneri.